A 63-amino-acid polypeptide reads, in one-letter code: Cypmaclein (63 aa).

This sequence belongs to the GASA family. Expressed in pollen (at protein level).

The polypeptide is Cypmaclein (Cupressus sempervirens (Italian cypress)).